Consider the following 555-residue polypeptide: Connector enhancer of kinase suppressor of ras 3 (555 aa).

One can recognise an SAM domain in the interval 7–72 (WSPKQVVDWT…LEAVDLLCAL (66 aa)). Residues 80–174 (TMKNLVLKLR…TAVQKDCLIA (95 aa)) enclose the CRIC domain. In terms of domain architecture, PDZ spans 211–293 (EVHLPNVRPG…GVVLLLKKRP (83 aa)). Disordered stretches follow at residues 308–333 (RWKPPLVQTSPPPTTTQSPESTMDAS), 362–389 (SFGYRGHSKSKQPLPVRKGSESPNSFLD), and 518–538 (PFQEEGSKKKSASSSAKASSG). A compositionally biased stretch (low complexity) spans 311 to 329 (PPLVQTSPPPTTTQSPEST). The region spanning 325-546 (SPESTMDASL…SGEPSLLVSW (222 aa)) is the DUF1170 domain. 2 positions are modified to phosphoserine: S381 and S383.

It belongs to the CNKSR family. In terms of assembly, interacts with epithelial sodium channel ENaC. Interacts directly with SCNN1A (ENaC subunit alpha) and SCNN1B (ENaC subunit beta) C-terminal tails. Interacts with ENaC regulatory proteins NEDD4L, RAF1 and SGK1. Expressed in kidney.

The protein localises to the cytoplasm. It is found in the apical cell membrane. Involved in transepithelial sodium transport. Regulates aldosterone-induced and epithelial sodium channel (ENaC)-mediated sodium transport through regulation of ENaC cell surface expression. Acts as a scaffold protein coordinating the assembly of an ENaC-regulatory complex (ERC). The sequence is that of Connector enhancer of kinase suppressor of ras 3 (Cnksr3) from Mus musculus (Mouse).